The sequence spans 197 residues: SERTA domain-containing protein 3 (197 aa).

The interval 1 to 23 (MGGLKRKHSDLEEEEEEEKWDWS) is disordered. The SERTA domain occupies 27–74 (LRSYQQALLRISLDKVQRSLGPRAPSLRRHVLIHNTLQQLQAAIRLAP).

In terms of assembly, interacts with RPA2.

The protein resides in the nucleus. It localises to the nucleolus. Its function is as follows. Antiviral interferon-stimulated protein that plays a role in innate immunity and in the suppression of viruses through different mechanisms. Plays a role in the late phase response of TLR-induced immune effector expression. Strong transcriptional coactivator. This chain is SERTA domain-containing protein 3 (Sertad3), found in Mus musculus (Mouse).